The primary structure comprises 371 residues: Deoxyhypusine synthase (371 aa).

NAD(+) is bound by residues 112–116, 138–140, Glu144, and Asp245; these read SNLVT and SAG. Residue 143-144 coordinates spermidine; sequence EE. Asp250 contributes to the spermidine binding site. Gly291 is a binding site for NAD(+). His296 lines the spermidine pocket. 316–317 serves as a coordination point for NAD(+); that stretch reads TG. Residues 322–324 and 331–337 contribute to the spermidine site; these read GSD and EAVSWGK. Lys337 functions as the Nucleophile in the catalytic mechanism. Residue 350-351 participates in NAD(+) binding; it reads EA.

It belongs to the deoxyhypusine synthase family. Requires NAD(+) as cofactor.

It catalyses the reaction [eIF5A protein]-L-lysine + spermidine = [eIF5A protein]-deoxyhypusine + propane-1,3-diamine. It participates in protein modification; eIF5A hypusination. Catalyzes the NAD-dependent oxidative cleavage of spermidine and the subsequent transfer of the butylamine moiety of spermidine to the epsilon-amino group of a critical lysine residue of the eIF-5A precursor protein to form the intermediate deoxyhypusine residue. This is the first step of the post-translational modification of that lysine into an unusual amino acid residue named hypusine. Hypusination is unique to mature eIF-5A factor and is essential for its function. In Caenorhabditis elegans, this protein is Deoxyhypusine synthase.